A 160-amino-acid chain; its full sequence is Endoribonuclease YbeY (160 aa).

Residues His-112, His-116, and His-122 each coordinate Zn(2+).

The protein belongs to the endoribonuclease YbeY family. Zn(2+) serves as cofactor.

It is found in the cytoplasm. Functionally, single strand-specific metallo-endoribonuclease involved in late-stage 70S ribosome quality control and in maturation of the 3' terminus of the 16S rRNA. The polypeptide is Endoribonuclease YbeY (Maricaulis maris (strain MCS10) (Caulobacter maris)).